The following is a 98-amino-acid chain: Protein Asterix (98 aa).

Helical transmembrane passes span 32–52 (LFSIIFGFLGIMLKYKICLWV) and 78–98 (VSLSLMGLVMAYFGPNSNLFV).

Belongs to the Asterix family.

It is found in the membrane. This Dictyostelium discoideum (Social amoeba) protein is Protein Asterix.